Reading from the N-terminus, the 506-residue chain is Sporulation kinase D (506 aa).

Transmembrane regions (helical) follow at residues 17–37 and 250–270; these read VKLY…FVYE and LVLP…LVLY. The Histidine kinase domain maps to 298–505; it reads STAHEIRNPL…EVTITLPVSA (208 aa). His301 carries the post-translational modification Phosphohistidine; by autocatalysis.

Oligomerizes, probably forms homodimers; oligomerization is assisted by FloT. Interacts with FloT.

The protein localises to the cell membrane. The enzyme catalyses ATP + protein L-histidine = ADP + protein N-phospho-L-histidine.. In terms of biological role, phosphorylates the sporulation-regulatory protein spo0F and, to a minor extent, is responsible for heterogeneous expression of spo0A during logarithmical growth. Also phosphorylates spo0A under biofilm growth conditions. This is Sporulation kinase D (kinD) from Bacillus subtilis (strain 168).